A 224-amino-acid chain; its full sequence is 7-cyano-7-deazaguanine synthase (224 aa).

12–22 lines the ATP pocket; it reads MSGGMDSTLGA. C191, C199, C202, and C205 together coordinate Zn(2+).

Belongs to the QueC family. Requires Zn(2+) as cofactor.

The enzyme catalyses 7-carboxy-7-deazaguanine + NH4(+) + ATP = 7-cyano-7-deazaguanine + ADP + phosphate + H2O + H(+). Its pathway is purine metabolism; 7-cyano-7-deazaguanine biosynthesis. Its function is as follows. Catalyzes the ATP-dependent conversion of 7-carboxy-7-deazaguanine (CDG) to 7-cyano-7-deazaguanine (preQ(0)). The sequence is that of 7-cyano-7-deazaguanine synthase from Sulfurimonas denitrificans (strain ATCC 33889 / DSM 1251) (Thiomicrospira denitrificans (strain ATCC 33889 / DSM 1251)).